Consider the following 716-residue polypeptide: Amino-acid acetyltransferase, mitochondrial (716 aa).

The transit peptide at 1–44 directs the protein to the mitochondrion; the sequence is MSLHTGWPRTVNSSFLKKHRSSLCTCQHTSSVLPRSFSTTPDRH. Residues 37 to 56 show a composition bias toward polar residues; sequence FSTTPDRHVQQSADFSSTSR. 2 disordered regions span residues 37-58 and 96-121; these read FSTT…SRSY and KAQH…TLPS. Residues 101 to 112 show a composition bias toward basic and acidic residues; sequence KSPDANKPEPEK. The N-acetyltransferase domain maps to 537–706; the sequence is SRPRLKLDDP…YEAVCRSIQP (170 aa).

It belongs to the acetyltransferase family.

Its subcellular location is the mitochondrion. The enzyme catalyses L-glutamate + acetyl-CoA = N-acetyl-L-glutamate + CoA + H(+). It participates in amino-acid biosynthesis; L-arginine biosynthesis; N(2)-acetyl-L-ornithine from L-glutamate: step 1/4. N-acetylglutamate synthase involved in arginine biosynthesis. This is Amino-acid acetyltransferase, mitochondrial (arg2) from Aspergillus fumigatus (strain CBS 144.89 / FGSC A1163 / CEA10) (Neosartorya fumigata).